The primary structure comprises 105 residues: Small ribosomal subunit protein uS10c (105 aa).

The protein belongs to the universal ribosomal protein uS10 family. In terms of assembly, part of the 30S ribosomal subunit.

It is found in the plastid. The protein resides in the chloroplast. Its function is as follows. Involved in the binding of tRNA to the ribosomes. This is Small ribosomal subunit protein uS10c from Pyropia yezoensis (Susabi-nori).